We begin with the raw amino-acid sequence, 436 residues long: MNYTTQMDAAKKGIITKEMQVVSEKEGINIETLMNLMAEGKIVIPANKNHKSISAEGVGQGLRTKINVNLGISKDCANIELELEKVKKAIDMNAESIMDLSNYGKTYDFRKRLVEVSTAMIGTVPMYDVVGFYDKELKDITVDEFFEVVEKHAKDGVDFVTIHAGLNRETIETFRRNKRLTNIVSRGGSLLFAWMELNNRENPFYEYFDRLLDICEKYDLTLSLGDACRPGSIADATDAVQIKELITLGELTKRAWERNVQVIIEGPGHMAMNEIEANVLLEKKLCHGAPFYVLGPIVTDIAPGYDHITSAIGGAMAASYGADFLCYVTPAEHLRLPNLEDVREGIVATKIAAHAADIAKGISGARDIDNKMSDARKRLDWDEMFSLAIDSEKAIRYRKESTPEHKDSCTMCGKMCSIRNMNKILEGKDINLLRED.

Substrate is bound by residues asparagine 69, methionine 98, tyrosine 127, histidine 163, 185–187 (SRG), 226–229 (DACR), and glutamate 265. Histidine 269 is a binding site for Zn(2+). Tyrosine 292 lines the substrate pocket. Zn(2+) is bound at residue histidine 333. Residues cysteine 409, cysteine 412, and cysteine 416 each contribute to the [4Fe-4S] cluster site.

The protein belongs to the ThiC family. [4Fe-4S] cluster serves as cofactor.

It carries out the reaction 5-amino-1-(5-phospho-beta-D-ribosyl)imidazole + S-adenosyl-L-methionine = 4-amino-2-methyl-5-(phosphooxymethyl)pyrimidine + CO + 5'-deoxyadenosine + formate + L-methionine + 3 H(+). It participates in cofactor biosynthesis; thiamine diphosphate biosynthesis. Functionally, catalyzes the synthesis of the hydroxymethylpyrimidine phosphate (HMP-P) moiety of thiamine from aminoimidazole ribotide (AIR) in a radical S-adenosyl-L-methionine (SAM)-dependent reaction. The polypeptide is Phosphomethylpyrimidine synthase (Clostridium perfringens (strain ATCC 13124 / DSM 756 / JCM 1290 / NCIMB 6125 / NCTC 8237 / Type A)).